A 577-amino-acid polypeptide reads, in one-letter code: Proline--tRNA ligase (577 aa).

It belongs to the class-II aminoacyl-tRNA synthetase family. ProS type 1 subfamily. In terms of assembly, homodimer.

It localises to the cytoplasm. It catalyses the reaction tRNA(Pro) + L-proline + ATP = L-prolyl-tRNA(Pro) + AMP + diphosphate. Catalyzes the attachment of proline to tRNA(Pro) in a two-step reaction: proline is first activated by ATP to form Pro-AMP and then transferred to the acceptor end of tRNA(Pro). As ProRS can inadvertently accommodate and process non-cognate amino acids such as alanine and cysteine, to avoid such errors it has two additional distinct editing activities against alanine. One activity is designated as 'pretransfer' editing and involves the tRNA(Pro)-independent hydrolysis of activated Ala-AMP. The other activity is designated 'posttransfer' editing and involves deacylation of mischarged Ala-tRNA(Pro). The misacylated Cys-tRNA(Pro) is not edited by ProRS. The polypeptide is Proline--tRNA ligase (Herminiimonas arsenicoxydans).